A 64-amino-acid polypeptide reads, in one-letter code: uncharacterized protein (64 aa).

It belongs to the orthopoxviruses VACWR006 protein family.

This is an uncharacterized protein from Vaccinia virus (strain Western Reserve) (VACV).